Consider the following 196-residue polypeptide: Peptidyl-tRNA hydrolase (196 aa).

Residue Y18 coordinates tRNA. The Proton acceptor role is filled by H23. Residues F69, N71, and N117 each coordinate tRNA.

It belongs to the PTH family. Monomer.

Its subcellular location is the cytoplasm. It carries out the reaction an N-acyl-L-alpha-aminoacyl-tRNA + H2O = an N-acyl-L-amino acid + a tRNA + H(+). Functionally, hydrolyzes ribosome-free peptidyl-tRNAs (with 1 or more amino acids incorporated), which drop off the ribosome during protein synthesis, or as a result of ribosome stalling. Catalyzes the release of premature peptidyl moieties from peptidyl-tRNA molecules trapped in stalled 50S ribosomal subunits, and thus maintains levels of free tRNAs and 50S ribosomes. In Marinobacter nauticus (strain ATCC 700491 / DSM 11845 / VT8) (Marinobacter aquaeolei), this protein is Peptidyl-tRNA hydrolase.